The following is a 324-amino-acid chain: Membrane protein UL8 (324 aa).

The segment at I36–K138 is immunoglobulin V-like domain. Residues T278–L298 traverse the membrane as a helical segment.

The protein belongs to the RL11 family. In terms of processing, highly glycosylated.

It localises to the host cell membrane. Its function is as follows. Plays a role in the inhibition of pro-inflammatory cytokine production. This effect is mediated by the conserved Ig-like domain. The polypeptide is Membrane protein UL8 (UL8) (Homo sapiens (Human)).